The following is a 363-amino-acid chain: Putative RAD2-like endonuclease 095R (363 aa).

Belongs to the XPG/RAD2 endonuclease family. Requires Mg(2+) as cofactor.

The protein resides in the host nucleus. Functionally, probable endonuclease. The polypeptide is Putative RAD2-like endonuclease 095R (Frog virus 3 (isolate Goorha) (FV-3)).